Consider the following 498-residue polypeptide: Aspartyl aminopeptidase (498 aa).

Position 91 (His91) interacts with Zn(2+). His166 provides a ligand contact to substrate. Residue Asp274 participates in Zn(2+) binding. A substrate-binding site is contributed by Glu311. Zn(2+)-binding residues include Glu312 and Asp363. Residues Asp363, His366, Lys391, and Tyr398 each coordinate substrate. His463 lines the Zn(2+) pocket.

Belongs to the peptidase M18 family. In terms of assembly, tetrahedron-shaped homododecamer built from six homodimers. Requires Zn(2+) as cofactor. In terms of processing, the N-terminus is blocked.

It carries out the reaction Release of an N-terminal aspartate or glutamate from a peptide, with a preference for aspartate.. Inhibited by zinc. Stimulated by calcium and bacitracin. In Aspergillus oryzae (strain ATCC 42149 / RIB 40) (Yellow koji mold), this protein is Aspartyl aminopeptidase (dapA).